Reading from the N-terminus, the 343-residue chain is MTITPQEALQRTIEHREIFHDEMLHLMRLIMRGDMSPVMAAAIITGLRVKKETIGEITAAATVMREFARHVEVEDNANFVDIVGTGGDGSHTFNISTATMFVAAAAGAKVAKHGNRGVSSKSGSADVLEALGVNIDLQPEQVAASIAETGMGFMFAPNHHPAMRNIAPVRRELGVRTIFNILGPLTNPADAPNQLMGVFHPDLVGIQVRVMQRLGARHVLVVYGKDGMDEVSLGAATLVGELRDGEVREYEIHPEDFGMQMVSNRTLKVENAGESRVMLLEALGNKPGVAREIVTLNAGTALYSANVAGSIADGIQLAREAIASGRAREKVDELARFTQQFKR.

5-phospho-alpha-D-ribose 1-diphosphate contacts are provided by residues glycine 84, 87–88 (GD), threonine 92, 94–97 (NIST), 112–120 (KHGNRGVSS), and serine 124. Anthranilate is bound at residue glycine 84. Serine 96 serves as a coordination point for Mg(2+). Asparagine 115 is a binding site for anthranilate. An anthranilate-binding site is contributed by arginine 170. Mg(2+)-binding residues include aspartate 229 and glutamate 230.

This sequence belongs to the anthranilate phosphoribosyltransferase family. As to quaternary structure, homodimer. Requires Mg(2+) as cofactor.

It carries out the reaction N-(5-phospho-beta-D-ribosyl)anthranilate + diphosphate = 5-phospho-alpha-D-ribose 1-diphosphate + anthranilate. Its pathway is amino-acid biosynthesis; L-tryptophan biosynthesis; L-tryptophan from chorismate: step 2/5. In terms of biological role, catalyzes the transfer of the phosphoribosyl group of 5-phosphorylribose-1-pyrophosphate (PRPP) to anthranilate to yield N-(5'-phosphoribosyl)-anthranilate (PRA). The protein is Anthranilate phosphoribosyltransferase of Burkholderia thailandensis (strain ATCC 700388 / DSM 13276 / CCUG 48851 / CIP 106301 / E264).